A 773-amino-acid chain; its full sequence is MFGGEYDHAYDANNGQRFQPPVLDAMEFEKPGSPSVGDHFLRQQISNQSLHDQYSSHMEQQQQQQQQQHNAAYGAGFTDIPQLHPSTPPHGLVQKISNGNFHPAMNQGGNIPSTSNMNNMFNTPPPTMGNNPLYSHDNNSTNLLQDNLNQARSQFSPDRYSVDSDFNNGAGNHVMANGNYNINGSQSSSPYHQPQTFYTNSNLSSGQLSAHRSSPQRQPAQPLQQTTFTQLPQPSLPPQQQQQQQQQQQQQQQQQPKFQSMVPPQQTQLQQQQQQELQNAGSYMYFERRPDLLSKSTQDKAAAVKLKVENYYQQSVKYAIERNERRVELETELGSHNWSEERNARQLASLGKKESQFLRLRRTRLSLEDFHTVQVIGKGAFGEVRLVQKKDTGKIYAMKTLLKSEMYKKDQLAHVKAERDVLAGTDSPWIVSLYYSFQDAQYLYLIMEFLPGGDLMTMLIRWQLFTEDVTRFYMAECILAIETIHKLGFIHRDIKPDNILIDIRGHIKLSDFGLSTGFHKTHDSNYYKKLLQQDEATTKNGAPNDAGDGSNNRQTMIVDSINLTMSNRQQIQTWRKSRRLMAYSTVGTPDYIAPEIFLYQGYGQDCDWWSLGAIMYECLIGWPPFCSETPQETYRKIMNFEQTLQFPEDVHISYEAEDLIRRLLTHSNQRLGRQGGADEIKSHPFFRGVDWNTIRQVEAPYIPKLSSITDTRFFPTDELENVPDSPAMAQAAKQREQMMKNGVNPNQNQVKEDLPFIGYTYSRFDYLTRKNAL.

2 stretches are compositionally biased toward polar residues: residues 50–59 (LHDQYSSHME) and 178–217 (GNYN…SPQR). Disordered regions lie at residues 50 to 111 (LHDQ…GGNI) and 177 to 275 (NGNY…QQQQ). Composition is skewed to low complexity over residues 218-256 (QPAQ…QQQP) and 265-275 (QQTQLQQQQQQ). The region spanning 370–686 (FHTVQVIGKG…ADEIKSHPFF (317 aa)) is the Protein kinase domain. Residues 376 to 384 (IGKGAFGEV) and Lys-399 contribute to the ATP site. Asp-493 (proton acceptor) is an active-site residue. The 85-residue stretch at 687-771 (RGVDWNTIRQ…SRFDYLTRKN (85 aa)) folds into the AGC-kinase C-terminal domain.

It belongs to the protein kinase superfamily. STE Ser/Thr protein kinase family. COT1 subfamily.

The catalysed reaction is L-seryl-[protein] + ATP = O-phospho-L-seryl-[protein] + ADP + H(+). It catalyses the reaction L-threonyl-[protein] + ATP = O-phospho-L-threonyl-[protein] + ADP + H(+). Its function is as follows. Protein kinase that seems to play a role in the regulation of cell morphogenesis and proliferation. This Candida glabrata (strain ATCC 2001 / BCRC 20586 / JCM 3761 / NBRC 0622 / NRRL Y-65 / CBS 138) (Yeast) protein is Serine/threonine-protein kinase CBK1 (CBK1).